The chain runs to 453 residues: MDWKEVLRRRLATPNTCPNKKKSEQELKDEEMDLFTKYYSEWKGGRKNTNEFYKTIPRFYYRLPAEDEVLLQKLREESRAVFLQRKSRELLDNEELQNLWFLLDKHQTPPMIGEEAMINYENFLKVGEKAGAKCKQFFTAKVFAKLLHTDSYGRISIMQFFNYVMRKVWLHQTRIGLSLYDVAGQGYLRESDLENYILELIPTLPQLDGLEKSFYSFYVCTAVRKFFFFLDPLRTGKIKIQDILACSFLDDLLELRDEELSKESQETNWFSAPSALRVYGQYLNLDKDHNGMLSKEELSRYGTATMTNVFLDRVFQECLTYDGEMDYKTYLDFVLALENRKEPAALQYIFKLLDIENKGYLNVFSLNYFFRAIQELMKIHGQDPVSFQDVKDEIFDMVKPKDPLKISLQDLINSNQGDTVTTILIDLNGFWTYENREALVANDSENSADLDDT.

2 EF-hand domains span residues proline 273 to asparagine 308 and lysine 341 to leucine 376. Ca(2+)-binding residues include aspartate 286, aspartate 288, asparagine 290, methionine 292, and glutamate 297.

In terms of assembly, interacts with MCM3AP/GANP. Interacts with PPP5C, and the phosphatase 2A core enzyme composed of the PPP2CA catalytic subunit and the constant regulatory subunit PPP2R1A. Finds in a complex with ABCB1, TFPI2 and PPP2R3C; leading to the dephosphorylation of ABCB1. In terms of tissue distribution, ubiquitously expressed in brain and other tissues.

It localises to the nucleus. The protein resides in the cytoplasm. In terms of biological role, may regulate MCM3AP phosphorylation through phosphatase recruitment. May act as a negative regulator of ABCB1 expression and function through the dephosphorylation of ABCB1 by TFPI2/PPP2R3C complex. May play a role in the activation-induced cell death of B-cells. The protein is Serine/threonine-protein phosphatase 2A regulatory subunit B'' subunit gamma (PPP2R3C) of Homo sapiens (Human).